Consider the following 316-residue polypeptide: Fe-S cluster assembly protein dre2 (316 aa).

The N-terminal SAM-like domain stretch occupies residues 1-128 (MAPRCLLIGT…KPEQEEPVSI (128 aa)). The segment at 129–208 (PLKFGKNKAN…EDDLITEADM (80 aa)) is linker. The tract at residues 141–177 (SATNGTNGAVNPDGSVPLNLNRKRDQPEPVKPAGVGF) is disordered. 4 residues coordinate [2Fe-2S] cluster: Cys-218, Cys-229, Cys-232, and Cys-234. A fe-S binding site A region spans residues 218–234 (CQPKPGKRRRACKDCTC). Residues Cys-279, Cys-282, Cys-290, and Cys-293 each contribute to the [4Fe-4S] cluster site. 2 short sequence motifs (cx2C motif) span residues 279 to 282 (CGNC) and 290 to 293 (CDGC). Residues 279–293 (CGNCALGDAFRCDGC) are fe-S binding site B.

Belongs to the anamorsin family. In terms of assembly, monomer. Interacts with TAH18. Interacts with MIA40. [2Fe-2S] cluster serves as cofactor. Requires [4Fe-4S] cluster as cofactor.

The protein localises to the cytoplasm. The protein resides in the mitochondrion intermembrane space. Component of the cytosolic iron-sulfur (Fe-S) protein assembly (CIA) machinery required for the maturation of extramitochondrial Fe-S proteins. Part of an electron transfer chain functioning in an early step of cytosolic Fe-S biogenesis, facilitating the de novo assembly of a [4Fe-4S] cluster on the scaffold complex CFD1-NBP35. Electrons are transferred to DRE2 from NADPH via the FAD- and FMN-containing protein TAH18. TAH18-DRE2 are also required for the assembly of the diferric tyrosyl radical cofactor of ribonucleotide reductase (RNR), probably by providing electrons for reduction during radical cofactor maturation in the catalytic small subunit RNR2. In Pyrenophora tritici-repentis (strain Pt-1C-BFP) (Wheat tan spot fungus), this protein is Fe-S cluster assembly protein dre2.